Reading from the N-terminus, the 160-residue chain is 3-hydroxyacyl-[acyl-carrier-protein] dehydratase FabZ (160 aa).

The active site involves H63.

Belongs to the thioester dehydratase family. FabZ subfamily.

The protein localises to the cytoplasm. It carries out the reaction a (3R)-hydroxyacyl-[ACP] = a (2E)-enoyl-[ACP] + H2O. Its function is as follows. Involved in unsaturated fatty acids biosynthesis. Catalyzes the dehydration of short chain beta-hydroxyacyl-ACPs and long chain saturated and unsaturated beta-hydroxyacyl-ACPs. The protein is 3-hydroxyacyl-[acyl-carrier-protein] dehydratase FabZ of Xylella fastidiosa (strain M12).